Reading from the N-terminus, the 544-residue chain is Chaperonin GroEL (544 aa).

ATP contacts are provided by residues 30-33 (TLGP), K51, 87-91 (DGTTT), G415, and D495.

It belongs to the chaperonin (HSP60) family. As to quaternary structure, forms a cylinder of 14 subunits composed of two heptameric rings stacked back-to-back. Interacts with the co-chaperonin GroES.

It is found in the cytoplasm. It catalyses the reaction ATP + H2O + a folded polypeptide = ADP + phosphate + an unfolded polypeptide.. In terms of biological role, together with its co-chaperonin GroES, plays an essential role in assisting protein folding. The GroEL-GroES system forms a nano-cage that allows encapsulation of the non-native substrate proteins and provides a physical environment optimized to promote and accelerate protein folding. The chain is Chaperonin GroEL from Methylobacillus flagellatus (strain ATCC 51484 / DSM 6875 / VKM B-1610 / KT).